We begin with the raw amino-acid sequence, 137 residues long: Large ribosomal subunit protein uL16 (137 aa).

It belongs to the universal ribosomal protein uL16 family. Part of the 50S ribosomal subunit.

Binds 23S rRNA and is also seen to make contacts with the A and possibly P site tRNAs. This chain is Large ribosomal subunit protein uL16, found in Marinomonas sp. (strain MWYL1).